Reading from the N-terminus, the 357-residue chain is Transcription factor HHO1 (357 aa).

Disordered stretches follow at residues 94 to 117 and 171 to 198; these read TSIEEEVDDKDDDDEEHQSHETDI and NNNIKSPVTTSDGGSGGGGGRRGQRKNR. The segment covering 96-109 has biased composition (acidic residues); it reads IEEEVDDKDDDDEE. A compositionally biased stretch (polar residues) spans 171–182; it reads NNNIKSPVTTSD. Residues 193–253 enclose the HTH myb-type domain; the sequence is GQRKNRRCWS…HLQKYRLHAR (61 aa). The segment at residues 224–249 is a DNA-binding region (H-T-H motif); the sequence is PKQIRDIMKVDGLTNDEVKSHLQKYR.

Its subcellular location is the nucleus. Functionally, probable factor involved in nitrate and phosphate signaling in roots. Integrates nitrate and phosphate starvation responses and adaptation of root architecture, depending on nutrient availabilities. Acts downstream of the nitrate sensor and transporter NPF6.3/NRT1.1. Represses primary root development in response to phosphate deficiency conditions, only when nitrate is present. This Arabidopsis thaliana (Mouse-ear cress) protein is Transcription factor HHO1.